The sequence spans 148 residues: Large ribosomal subunit protein bL9 (148 aa).

The protein belongs to the bacterial ribosomal protein bL9 family.

Functionally, binds to the 23S rRNA. This chain is Large ribosomal subunit protein bL9, found in Staphylococcus epidermidis (strain ATCC 35984 / DSM 28319 / BCRC 17069 / CCUG 31568 / BM 3577 / RP62A).